A 305-amino-acid chain; its full sequence is Ribose import binding protein RbsB (305 aa).

Residues methionine 1–alanine 18 form the signal peptide. Cysteine 19 carries N-palmitoyl cysteine lipidation. Cysteine 19 carries the S-diacylglycerol cysteine lipid modification.

This sequence belongs to the bacterial solute-binding protein 2 family. In terms of assembly, the complex is composed of an ATP-binding protein (RbsA), two transmembrane proteins (RbsC) and a solute-binding protein (RbsB). Interacts with FloT.

Its subcellular location is the cell membrane. The protein resides in the membrane raft. Its function is as follows. Part of the ABC transporter complex RbsABC involved in ribose import. Binds ribose. In Bacillus subtilis (strain 168), this protein is Ribose import binding protein RbsB (rbsB).